A 176-amino-acid polypeptide reads, in one-letter code: Methenyltetrahydromethanopterin cyclohydrolase (176 aa).

This sequence belongs to the MCH family.

Its subcellular location is the cytoplasm. It catalyses the reaction 5,10-methenyl-5,6,7,8-tetrahydromethanopterin + H2O = N(5)-formyl-5,6,7,8-tetrahydromethanopterin + H(+). It participates in one-carbon metabolism; formaldehyde degradation; formate from formaldehyde (H(4)MPT route): step 3/5. Functionally, catalyzes the hydrolysis of methenyl-H(4)MPT(+) to 5-formyl-H(4)MPT. The protein is Methenyltetrahydromethanopterin cyclohydrolase (mch) of Methylophilus methylotrophus (Bacterium W3A1).